We begin with the raw amino-acid sequence, 293 residues long: Ribosomal protein L11 methyltransferase (293 aa).

The S-adenosyl-L-methionine site is built by Thr145, Gly166, Asp188, and Asn230.

Belongs to the methyltransferase superfamily. PrmA family.

It localises to the cytoplasm. The enzyme catalyses L-lysyl-[protein] + 3 S-adenosyl-L-methionine = N(6),N(6),N(6)-trimethyl-L-lysyl-[protein] + 3 S-adenosyl-L-homocysteine + 3 H(+). In terms of biological role, methylates ribosomal protein L11. In Shewanella baltica (strain OS185), this protein is Ribosomal protein L11 methyltransferase.